Reading from the N-terminus, the 321-residue chain is MNAQLDNQGRLRHFLTTEGLPRPLLNQILDTAESFTGVIGKSVKKVPLLRGRTVINLFFEPSTRTRTTFELAATRLSADVLNIDVAVSSQSKGESLLDMLRNLEAMQCDAFVVRHGDSGTAEFIARHVRPGVSVLNAGDGRHAHPTQAMLDMFTIRQHKGDFEPLRVAIVGDILHSRVARSQIHALNGLGAGEVRVIAPRTLLPRDVETLGVRVFHDMQAGLRDVDVVMMLRLQRERMRGALLPSEGEYFKLYGLTEEKLSVAHPDAIIMHPGPINRGVEMNSAVADGPRSVILQQVTNGIAVRMALMSMLLGRAGGGEDA.

The carbamoyl phosphate site is built by Arg64 and Thr65. Residue Lys92 coordinates L-aspartate. Residues Arg114, His144, and Gln147 each coordinate carbamoyl phosphate. 2 residues coordinate L-aspartate: Arg177 and Arg232. Gly273 and Pro274 together coordinate carbamoyl phosphate.

Belongs to the aspartate/ornithine carbamoyltransferase superfamily. ATCase family. As to quaternary structure, heterododecamer (2C3:3R2) of six catalytic PyrB chains organized as two trimers (C3), and six regulatory PyrI chains organized as three dimers (R2).

It catalyses the reaction carbamoyl phosphate + L-aspartate = N-carbamoyl-L-aspartate + phosphate + H(+). Its pathway is pyrimidine metabolism; UMP biosynthesis via de novo pathway; (S)-dihydroorotate from bicarbonate: step 2/3. Its function is as follows. Catalyzes the condensation of carbamoyl phosphate and aspartate to form carbamoyl aspartate and inorganic phosphate, the committed step in the de novo pyrimidine nucleotide biosynthesis pathway. The protein is Aspartate carbamoyltransferase catalytic subunit of Alkalilimnicola ehrlichii (strain ATCC BAA-1101 / DSM 17681 / MLHE-1).